Consider the following 426-residue polypeptide: MRIEDLRKEDWKLNERLEYLAKRGEILEEEYEKSVKEILKRVREEGDRAVIEFTKKFDGVELTPENMEVPFEELEKAYEEIEPEVREALEFAENRIRVFHEKQLENSFFKEEEGIILGQKVVPLEKVGVYVPGGKAAYPSTVLMNVVPASVAGVEEIIMVSPKPNKYTLAAAYIAGVSRVFQVGGAQAIGALAYGTEKIPKVDKIVGPGNIYVALAKKLVFGTVDIDMIAGPSEVLVIADERANPTWVAADMLSQAEHDELAASILLTPSEELANKVKEEVERLLSQLERKEIAQKSLEKFGTIFLVKDLYHACEVANYIAPEHLEVMVREPMALLPELKHAGAIFLGDYTTEPLGDYVLGPNHTLPTGGSTRFFSPLGVYDFIKRSSVLYVSREGFKRVANQAEAIAKAEGLTAHALAVKVRKND.

Residues tyrosine 130, glutamine 187, and asparagine 210 each coordinate NAD(+). Substrate-binding residues include serine 233, glutamine 255, and histidine 258. Glutamine 255 and histidine 258 together coordinate Zn(2+). Catalysis depends on proton acceptor residues glutamate 323 and histidine 324. Residues histidine 324, aspartate 357, glutamate 411, and histidine 416 each contribute to the substrate site. Aspartate 357 contributes to the Zn(2+) binding site. Residue histidine 416 participates in Zn(2+) binding.

The protein belongs to the histidinol dehydrogenase family. Requires Zn(2+) as cofactor.

The enzyme catalyses L-histidinol + 2 NAD(+) + H2O = L-histidine + 2 NADH + 3 H(+). It functions in the pathway amino-acid biosynthesis; L-histidine biosynthesis; L-histidine from 5-phospho-alpha-D-ribose 1-diphosphate: step 9/9. Functionally, catalyzes the sequential NAD-dependent oxidations of L-histidinol to L-histidinaldehyde and then to L-histidine. This is Histidinol dehydrogenase (hisD) from Aquifex aeolicus (strain VF5).